The primary structure comprises 506 residues: 5-OH-xanthotoxin synthase (506 aa).

The helical transmembrane segment at 3–23 threads the bilayer; sequence PVVIFLVLAFPIASVYLLFYH. The substrate specificity stretch occupies residues 365–370; sequence TGPLLI. Cys-446 contributes to the heme binding site.

This sequence belongs to the cytochrome P450 family. The cofactor is heme.

The protein resides in the microsome membrane. The enzyme catalyses xanthotoxin + reduced [NADPH--hemoprotein reductase] + O2 = 5-hydroxyxanthotoxin + oxidized [NADPH--hemoprotein reductase] + H2O + 2 H(+). It participates in secondary metabolite biosynthesis. In terms of biological role, involved in the biosynthesis of coumarins and furanocoumarins (FCs), natural products required for defense responses against attacks by predators with potential medical and agroindustrial usages such as anticoagulant, rodenticide and artificial vanilla substitutes. Catalyzes the conversion of xanthotoxin into 5-hydroxyxanthotoxin. This is 5-OH-xanthotoxin synthase from Pastinaca sativa (Wild parsnip).